The following is a 292-amino-acid chain: Calponin-1 (292 aa).

The Calponin-homology (CH) domain maps to P28–A131. Calponin-like repeat units lie at residues I164–Y189, I204–F229, and I243–Y268. At T170 the chain carries Phosphothreonine; by ROCK2. A Phosphoserine; by PKC, CaMK2 and ROCK2 modification is found at S175. 2 positions are modified to phosphothreonine; by ROCK2: T180 and T184. T184 carries the phosphothreonine; by PKC and CaMK2 modification. The tract at residues R185–L193 is calmodulin-binding. The residue at position 259 (T259) is a Phosphothreonine; by ROCK2.

The protein belongs to the calponin family. In terms of processing, phosphorylation by PKC or CaM kinase II reduces the binding of calponin to F-actin and tropomyosin. As to expression, smooth muscle, and tissues containing significant amounts of smooth muscle.

Functionally, thin filament-associated protein that is implicated in the regulation and modulation of smooth muscle contraction. It is capable of binding to actin, calmodulin and tropomyosin. The interaction of calponin with actin inhibits the actomyosin Mg-ATPase activity. This is Calponin-1 (CNN1) from Gallus gallus (Chicken).